The chain runs to 66 residues: Probable cytochrome b-c1 complex subunit 9 (66 aa).

The Mitochondrial matrix portion of the chain corresponds to 1-20 (MSNALTNIFYKYVARRNSTW). The helical transmembrane segment at 21 to 46 (MAGAILGAFVLDSTVSGAVNTFFDSV) threads the bilayer. At 47–66 (NKGKLWKDVYAERVKKGISQ) the chain is on the mitochondrial intermembrane side.

The protein belongs to the UQCR10/QCR9 family. Component of the ubiquinol-cytochrome c oxidoreductase (cytochrome b-c1 complex, complex III, CIII), a multisubunit enzyme composed of 3 respiratory subunits cytochrome b, cytochrome c1 and Rieske protein, 2 core protein subunits, and additional low-molecular weight protein subunits. The complex exists as an obligatory dimer and forms supercomplexes (SCs) in the inner mitochondrial membrane with cytochrome c oxidase (complex IV, CIV).

It localises to the mitochondrion inner membrane. Its function is as follows. Component of the ubiquinol-cytochrome c oxidoreductase, a multisubunit transmembrane complex that is part of the mitochondrial electron transport chain which drives oxidative phosphorylation. The respiratory chain contains 3 multisubunit complexes succinate dehydrogenase (complex II, CII), ubiquinol-cytochrome c oxidoreductase (cytochrome b-c1 complex, complex III, CIII) and cytochrome c oxidase (complex IV, CIV), that cooperate to transfer electrons derived from NADH and succinate to molecular oxygen, creating an electrochemical gradient over the inner membrane that drives transmembrane transport and the ATP synthase. The cytochrome b-c1 complex catalyzes electron transfer from ubiquinol to cytochrome c, linking this redox reaction to translocation of protons across the mitochondrial inner membrane, with protons being carried across the membrane as hydrogens on the quinol. In the process called Q cycle, 2 protons are consumed from the matrix, 4 protons are released into the intermembrane space and 2 electrons are passed to cytochrome c. The protein is Probable cytochrome b-c1 complex subunit 9 of Dictyostelium discoideum (Social amoeba).